Here is a 186-residue protein sequence, read N- to C-terminus: MASPNKAVIVPGNGGGDVATHGWYGWVKKGLEQIPGFQCLAKNMPDPITARESIWLPFMETELHCDEKTIIIGHSSGAIAAMRYAETHQVYALVLVSAYTSDLGDENERASGYFSRPWQWEKIKANCPHIVQFGSTDDPFLPWKEQQEVADRLDAKLYKFTDRGHFQNTEFHELISVVKSMLKGPE.

A retinoblastoma protein binding region spans residues 56–70 (LPFMETELHCDEKTI). Residues 63 to 67 (LHCDE) form an involved in binding to RB1 region. Active-site charge relay system residues include S75, D138, and H165.

The protein belongs to the RBBP9 family. Interacts with RB1; the interaction disrupts RB1 binding to E2F1. Interacts with RBL1 and RBL2. In terms of tissue distribution, expressed in spleen.

The catalysed reaction is valacyclovir + H2O = acyclovir + L-valine + H(+). In terms of biological role, serine hydrolase. Catalyzes the hydrolytic activation of amino acid ester of the antiviral prodrug valacyclovir to its corresponding active drug, acyclovir. May negatively regulate basal or autocrine TGF-beta signaling by suppressing SMAD2-SMAD3 phosphorylation. May play a role in the transformation process due to its capacity to confer resistance to the growth-inhibitory effects of TGF-beta through interaction with RB1 and the subsequent displacement of E2F1. The protein is Serine hydrolase RBBP9 (Rbbp9) of Mus musculus (Mouse).